Consider the following 1148-residue polypeptide: Pyruvate carboxylase (1148 aa).

The 457-residue stretch at 1–457 (MSQQSIQKVL…DTSFIDTTPE (457 aa)) folds into the Biotin carboxylation domain. Positions 121, 205, and 240 each coordinate ATP. The ATP-grasp domain occupies 125-321 (REQAEKAGIP…IVQTQILVAQ (197 aa)). Residue K242 is part of the active site. A Pyruvate carboxyltransferase domain is found at 534 to 802 (VLLTDTTFRD…RPEMNVQGVE (269 aa)). Residues 542–546 (RDAHQ) and R615 contribute to the substrate site. A divalent metal cation is bound at residue D543. K712, H741, and H743 together coordinate a divalent metal cation. K712 bears the N6-carboxylysine mark. Residue T876 coordinates substrate. A Biotinyl-binding domain is found at 1071–1146 (KADRTNPSHI…QTGDLLLEIE (76 aa)). The residue at position 1112 (K1112) is an N6-biotinyllysine.

In terms of assembly, homotetramer. At very low potassium concentrations, when intracellular levels of c-di-AMP are low, interacts with apo-DarB. c-di-AMP inhibits the binding of DarB to PYC. Does not bind directly c-di-AMP. Requires biotin as cofactor.

The catalysed reaction is hydrogencarbonate + pyruvate + ATP = oxaloacetate + ADP + phosphate + H(+). With respect to regulation, activated by the cyclic di-AMP (c-di-AMP) receptor DarB in the absence of c-di-AMP. Allosterically activated by acetyl-CoA. Inhibited by the biotin-complexing protein avidin. Catalyzes a 2-step reaction, involving the ATP-dependent carboxylation of the covalently attached biotin in the first step and the transfer of the carboxyl group to pyruvate in the second, leading to oxaloacetate production. Fulfills an anaplerotic function in B.subtilis as it is necessary for growth on glucose, but is not required for sporulation. The chain is Pyruvate carboxylase (pyc) from Bacillus subtilis (strain 168).